We begin with the raw amino-acid sequence, 262 residues long: Mediator of RNA polymerase II transcription subunit 8 (262 aa).

Residues leucine 168–valine 211 are a coiled coil. The interval lysine 183 to glutamate 206 is disordered. Acidic residues predominate over residues glutamate 188–glutamate 206.

The protein belongs to the Mediator complex subunit 8 family. As to quaternary structure, component of the Mediator complex.

It is found in the nucleus. In terms of biological role, component of the Mediator complex, a coactivator involved in the regulated transcription of nearly all RNA polymerase II-dependent genes. Mediator functions as a bridge to convey information from gene-specific regulatory proteins to the basal RNA polymerase II transcription machinery. Mediator is recruited to promoters by direct interactions with regulatory proteins and serves as a scaffold for the assembly of a functional preinitiation complex with RNA polymerase II and the general transcription factors. The chain is Mediator of RNA polymerase II transcription subunit 8 (MED8) from Coccidioides immitis (strain RS) (Valley fever fungus).